We begin with the raw amino-acid sequence, 517 residues long: Crotonobetaine/carnitine--CoA ligase (517 aa).

This sequence belongs to the ATP-dependent AMP-binding enzyme family.

The enzyme catalyses 4-(trimethylamino)butanoate + ATP + CoA = 4-(trimethylamino)butanoyl-CoA + AMP + diphosphate. The catalysed reaction is crotonobetaine + ATP + CoA = crotonobetainyl-CoA + AMP + diphosphate. It catalyses the reaction (R)-carnitine + ATP + CoA = (R)-carnitinyl-CoA + AMP + diphosphate. The protein operates within amine and polyamine metabolism; carnitine metabolism. Its function is as follows. Catalyzes the transfer of CoA to carnitine, generating the initial carnitinyl-CoA needed for the CaiB reaction cycle. Also has activity toward crotonobetaine and gamma-butyrobetaine. This is Crotonobetaine/carnitine--CoA ligase from Salmonella paratyphi A (strain ATCC 9150 / SARB42).